A 190-amino-acid chain; its full sequence is Crossover junction endodeoxyribonuclease RuvC (190 aa).

Active-site residues include D8, E67, and D139. Residues D8, E67, and D139 each coordinate Mg(2+).

Belongs to the RuvC family. Homodimer which binds Holliday junction (HJ) DNA. The HJ becomes 2-fold symmetrical on binding to RuvC with unstacked arms; it has a different conformation from HJ DNA in complex with RuvA. In the full resolvosome a probable DNA-RuvA(4)-RuvB(12)-RuvC(2) complex forms which resolves the HJ. Mg(2+) is required as a cofactor.

Its subcellular location is the cytoplasm. The enzyme catalyses Endonucleolytic cleavage at a junction such as a reciprocal single-stranded crossover between two homologous DNA duplexes (Holliday junction).. The RuvA-RuvB-RuvC complex processes Holliday junction (HJ) DNA during genetic recombination and DNA repair. Endonuclease that resolves HJ intermediates. Cleaves cruciform DNA by making single-stranded nicks across the HJ at symmetrical positions within the homologous arms, yielding a 5'-phosphate and a 3'-hydroxyl group; requires a central core of homology in the junction. The consensus cleavage sequence is 5'-(A/T)TT(C/G)-3'. Cleavage occurs on the 3'-side of the TT dinucleotide at the point of strand exchange. HJ branch migration catalyzed by RuvA-RuvB allows RuvC to scan DNA until it finds its consensus sequence, where it cleaves and resolves the cruciform DNA. The chain is Crossover junction endodeoxyribonuclease RuvC from Haemophilus influenzae (strain ATCC 51907 / DSM 11121 / KW20 / Rd).